Reading from the N-terminus, the 145-residue chain is 3-dehydroquinate dehydratase (145 aa).

The active-site Proton acceptor is tyrosine 24. Substrate is bound by residues asparagine 75, histidine 81, and aspartate 88. The active-site Proton donor is histidine 101. Substrate contacts are provided by residues 102–103 and arginine 112; that span reads IS.

This sequence belongs to the type-II 3-dehydroquinase family. As to quaternary structure, homododecamer.

The catalysed reaction is 3-dehydroquinate = 3-dehydroshikimate + H2O. It functions in the pathway metabolic intermediate biosynthesis; chorismate biosynthesis; chorismate from D-erythrose 4-phosphate and phosphoenolpyruvate: step 3/7. Functionally, catalyzes a trans-dehydration via an enolate intermediate. In Corynebacterium glutamicum (strain ATCC 13032 / DSM 20300 / JCM 1318 / BCRC 11384 / CCUG 27702 / LMG 3730 / NBRC 12168 / NCIMB 10025 / NRRL B-2784 / 534), this protein is 3-dehydroquinate dehydratase (aroQ).